A 1224-amino-acid polypeptide reads, in one-letter code: uncharacterized protein (1224 aa).

Disordered stretches follow at residues 1–67, 111–151, 193–270, 316–416, 430–957, and 1078–1167; these read MNQD…SSSI, QQSH…PPPL, QTEL…DPNI, DYNN…TVKK, SDSG…QEEK, and SFLP…TSHV. Over residues 10–48 the composition is skewed to low complexity; it reads SFHSNNNSNSNHHHSYNNSINSGSSSSGSNNSSNNNSFN. Acidic residues predominate over residues 49–58; sequence DEIEGGEIQE. Low complexity-rich tracts occupy residues 126–140, 193–212, and 228–241; these read SSSS…SSSS, QTEL…SSPP, and SAPT…SVSS. The span at 242 to 255 shows a compositional bias: polar residues; the sequence is LTQPQKPKSVQYSQ. Over residues 260–270 the composition is skewed to basic and acidic residues; that stretch reads EIREEKVDPNI. The segment covering 316 to 338 has biased composition (low complexity); the sequence is DYNNSNSNNSNNNNNNNNSITEN. A compositionally biased stretch (polar residues) spans 341-353; sequence DKMINNQPSSTNS. Low complexity-rich tracts occupy residues 379–413 and 430–450; these read TTTT…TTPT and SDSG…TSTP. Basic and acidic residues-rich tracts occupy residues 451 to 585 and 630 to 646; these read KSKD…DKKK and EIDK…KVES. A compositionally biased stretch (low complexity) spans 662-719; sequence TTTTTTSTSSSSSLPSLSSSSSSLPLPSSSSSSSSSSSSSSSSSSSSSSSSSSSTTST. Positions 727 to 750 are enriched in pro residues; the sequence is PPPPPQQPPPPPPQQPPPPPPPIN. The segment covering 755–892 has biased composition (basic and acidic residues); sequence SEHDKKIIEK…SDRDRDRKDS (138 aa). Residues 893-933 show a composition bias toward low complexity; it reads NSNNNSNNNNNNNNNNNNNNNNNNNNKKDNNNNNNNNNNNN. A compositionally biased stretch (basic and acidic residues) spans 948–957; it reads TPKKTKQEEK. Residues 950–991 are a coiled coil; it reads KKTKQEEKLIRSQIDQIKEDAKDLKKLAKELQSKNQNECLEM. Low complexity-rich tracts occupy residues 1078-1108 and 1114-1165; these read SFLP…TAPL and NPSE…PNTS.

This is an uncharacterized protein from Dictyostelium discoideum (Social amoeba).